The sequence spans 152 residues: D-aminoacyl-tRNA deacylase (152 aa).

The short motif at 137–138 (GP) is the Gly-cisPro motif, important for rejection of L-amino acids element.

This sequence belongs to the DTD family. As to quaternary structure, homodimer.

Its subcellular location is the cytoplasm. The catalysed reaction is glycyl-tRNA(Ala) + H2O = tRNA(Ala) + glycine + H(+). It catalyses the reaction a D-aminoacyl-tRNA + H2O = a tRNA + a D-alpha-amino acid + H(+). An aminoacyl-tRNA editing enzyme that deacylates mischarged D-aminoacyl-tRNAs. Also deacylates mischarged glycyl-tRNA(Ala), protecting cells against glycine mischarging by AlaRS. Acts via tRNA-based rather than protein-based catalysis; rejects L-amino acids rather than detecting D-amino acids in the active site. By recycling D-aminoacyl-tRNA to D-amino acids and free tRNA molecules, this enzyme counteracts the toxicity associated with the formation of D-aminoacyl-tRNA entities in vivo and helps enforce protein L-homochirality. This is D-aminoacyl-tRNA deacylase from Thermus aquaticus.